We begin with the raw amino-acid sequence, 402 residues long: UPF0261 protein BP1203 (402 aa).

This sequence belongs to the UPF0261 family.

This chain is UPF0261 protein BP1203, found in Bordetella pertussis (strain Tohama I / ATCC BAA-589 / NCTC 13251).